A 450-amino-acid chain; its full sequence is Probable ECA polymerase (450 aa).

The next 11 membrane-spanning stretches (helical) occupy residues 6 to 26 (FSGL…LTWF), 37 to 57 (VFFS…TSVL), 63 to 83 (VGVA…CFYA), 118 to 138 (VILM…NGFL), 155 to 175 (GVAL…VYFL), 181 to 201 (AWLF…MIVG), 207 to 227 (IIIA…ISLW), 228 to 248 (MLAA…LKRY), 341 to 361 (LVVM…GLII), 378 to 398 (YKAA…IVLA), and 410 to 430 (VFFI…YWLF).

It belongs to the WzyE family. In terms of assembly, probably part of a complex composed of WzxE, WzyE and WzzE.

The protein localises to the cell inner membrane. It functions in the pathway bacterial outer membrane biogenesis; enterobacterial common antigen biosynthesis. Functionally, probably involved in the polymerization of enterobacterial common antigen (ECA) trisaccharide repeat units. This chain is Probable ECA polymerase, found in Escherichia coli O139:H28 (strain E24377A / ETEC).